The sequence spans 158 residues: Large ribosomal subunit protein uL11 (158 aa).

The segment at 1-28 (MAGTIEALVPGGQATPGPPLGPELGPTP) is disordered.

This sequence belongs to the universal ribosomal protein uL11 family. In terms of assembly, part of the ribosomal stalk of the 50S ribosomal subunit. Interacts with L10 and the large rRNA to form the base of the stalk. L10 forms an elongated spine to which L12 dimers bind in a sequential fashion forming a multimeric L10(L12)X complex.

Forms part of the ribosomal stalk which helps the ribosome interact with GTP-bound translation factors. The sequence is that of Large ribosomal subunit protein uL11 from Halorubrum lacusprofundi (strain ATCC 49239 / DSM 5036 / JCM 8891 / ACAM 34).